The primary structure comprises 54 residues: Ribulose bisphosphate carboxylase large chain (54 aa).

A propeptide spanning residues 1–2 (MS) is cleaved from the precursor. Pro3 is subject to N-acetylproline. Lys14 bears the N6,N6,N6-trimethyllysine mark.

Belongs to the RuBisCO large chain family. Type I subfamily. Heterohexadecamer of 8 large chains and 8 small chains.

The protein localises to the plastid. Its subcellular location is the chloroplast. The catalysed reaction is 2 (2R)-3-phosphoglycerate + 2 H(+) = D-ribulose 1,5-bisphosphate + CO2 + H2O. It catalyses the reaction D-ribulose 1,5-bisphosphate + O2 = 2-phosphoglycolate + (2R)-3-phosphoglycerate + 2 H(+). RuBisCO catalyzes two reactions: the carboxylation of D-ribulose 1,5-bisphosphate, the primary event in carbon dioxide fixation, as well as the oxidative fragmentation of the pentose substrate in the photorespiration process. Both reactions occur simultaneously and in competition at the same active site. The protein is Ribulose bisphosphate carboxylase large chain (rbcL) of Colletia hystrix (Crucifixion thorn).